The primary structure comprises 261 residues: Cytochrome c oxidase subunit 3 (261 aa).

Residues 1 to 15 (MAHQAHAYHMVDPSP) are Mitochondrial matrix-facing. A helical membrane pass occupies residues 16–34 (WPLTGAIAALLLTSGTAVW). At 35-40 (FHFHSL) the chain is on the mitochondrial intermembrane side. The chain crosses the membrane as a helical span at residues 41–66 (TLLTLGNILLLLTMYQWWRDIIREGT). Topologically, residues 67 to 72 (FQGHHT) are mitochondrial matrix. Residues 73–105 (PPVQKGLRYGMILFITSEVFFFLGFFWAFYHAS) traverse the membrane as a helical segment. Over 106-128 (LAPTPELGGCWPPAGITTLDPFE) the chain is Mitochondrial intermembrane. Residues 129–152 (VPLLNTAVLLASGVTVTWAHHSIM) traverse the membrane as a helical segment. Residues 153–155 (EGE) lie on the Mitochondrial matrix side of the membrane. Residues 156–183 (RKQTIQALTLTILLGFYFTFLQGMEYYE) traverse the membrane as a helical segment. Topologically, residues 184-190 (APFTIAD) are mitochondrial intermembrane. Residues 191-223 (GVYGSTFFVATGFHGLHVIIGSTFLAVCLLRQV) form a helical membrane-spanning segment. The Mitochondrial matrix portion of the chain corresponds to 224–232 (QYHFTSEHH). A helical membrane pass occupies residues 233-256 (FGFEAAAWYWHFVDVVWLFLYVSI). Residues 257–261 (YWWGS) are Mitochondrial intermembrane-facing.

The protein belongs to the cytochrome c oxidase subunit 3 family. As to quaternary structure, component of the cytochrome c oxidase (complex IV, CIV), a multisubunit enzyme composed of 14 subunits. The complex is composed of a catalytic core of 3 subunits MT-CO1, MT-CO2 and MT-CO3, encoded in the mitochondrial DNA, and 11 supernumerary subunits COX4I, COX5A, COX5B, COX6A, COX6B, COX6C, COX7A, COX7B, COX7C, COX8 and NDUFA4, which are encoded in the nuclear genome. The complex exists as a monomer or a dimer and forms supercomplexes (SCs) in the inner mitochondrial membrane with NADH-ubiquinone oxidoreductase (complex I, CI) and ubiquinol-cytochrome c oxidoreductase (cytochrome b-c1 complex, complex III, CIII), resulting in different assemblies (supercomplex SCI(1)III(2)IV(1) and megacomplex MCI(2)III(2)IV(2)).

Its subcellular location is the mitochondrion inner membrane. It carries out the reaction 4 Fe(II)-[cytochrome c] + O2 + 8 H(+)(in) = 4 Fe(III)-[cytochrome c] + 2 H2O + 4 H(+)(out). Functionally, component of the cytochrome c oxidase, the last enzyme in the mitochondrial electron transport chain which drives oxidative phosphorylation. The respiratory chain contains 3 multisubunit complexes succinate dehydrogenase (complex II, CII), ubiquinol-cytochrome c oxidoreductase (cytochrome b-c1 complex, complex III, CIII) and cytochrome c oxidase (complex IV, CIV), that cooperate to transfer electrons derived from NADH and succinate to molecular oxygen, creating an electrochemical gradient over the inner membrane that drives transmembrane transport and the ATP synthase. Cytochrome c oxidase is the component of the respiratory chain that catalyzes the reduction of oxygen to water. Electrons originating from reduced cytochrome c in the intermembrane space (IMS) are transferred via the dinuclear copper A center (CU(A)) of subunit 2 and heme A of subunit 1 to the active site in subunit 1, a binuclear center (BNC) formed by heme A3 and copper B (CU(B)). The BNC reduces molecular oxygen to 2 water molecules using 4 electrons from cytochrome c in the IMS and 4 protons from the mitochondrial matrix. The protein is Cytochrome c oxidase subunit 3 (mt-co3) of Oncorhynchus mykiss (Rainbow trout).